A 254-amino-acid polypeptide reads, in one-letter code: Imidazole glycerol phosphate synthase subunit HisF (254 aa).

Residues aspartate 11 and aspartate 130 contribute to the active site.

It belongs to the HisA/HisF family. Heterodimer of HisH and HisF.

The protein resides in the cytoplasm. It carries out the reaction 5-[(5-phospho-1-deoxy-D-ribulos-1-ylimino)methylamino]-1-(5-phospho-beta-D-ribosyl)imidazole-4-carboxamide + L-glutamine = D-erythro-1-(imidazol-4-yl)glycerol 3-phosphate + 5-amino-1-(5-phospho-beta-D-ribosyl)imidazole-4-carboxamide + L-glutamate + H(+). It functions in the pathway amino-acid biosynthesis; L-histidine biosynthesis; L-histidine from 5-phospho-alpha-D-ribose 1-diphosphate: step 5/9. Its function is as follows. IGPS catalyzes the conversion of PRFAR and glutamine to IGP, AICAR and glutamate. The HisF subunit catalyzes the cyclization activity that produces IGP and AICAR from PRFAR using the ammonia provided by the HisH subunit. This chain is Imidazole glycerol phosphate synthase subunit HisF, found in Microcystis aeruginosa (strain NIES-843 / IAM M-2473).